Consider the following 257-residue polypeptide: Golgi SNAP receptor complex member 1-2 (257 aa).

Topologically, residues Met-1–Asp-235 are cytoplasmic. Asn-51 is subject to Phosphoserine. Residues Thr-113 to Leu-147 adopt a coiled-coil conformation. The helical; Anchor for type IV membrane protein transmembrane segment at Thr-236–Ser-256 threads the bilayer. A topological domain (vesicular) is located at residue Lys-257.

The protein belongs to the GOSR1 family. Component of several multiprotein Golgi SNARE complexes.

Its subcellular location is the golgi apparatus membrane. The protein resides in the endoplasmic reticulum membrane. Its function is as follows. Involved in transport from the ER to the Golgi apparatus as well as in intra-Golgi transport. It belongs to a super-family of proteins called t-SNAREs or soluble NSF (N-ethylmaleimide-sensitive factor) attachment protein receptor. The polypeptide is Golgi SNAP receptor complex member 1-2 (GOS12) (Arabidopsis thaliana (Mouse-ear cress)).